Consider the following 422-residue polypeptide: 5'-deoxyadenosine deaminase (422 aa).

Positions 57 and 59 each coordinate Zn(2+). Substrate contacts are provided by glutamate 86 and histidine 178. Histidine 205 is a binding site for Zn(2+). Substrate is bound by residues glutamate 208 and aspartate 294. Aspartate 294 lines the Zn(2+) pocket.

It belongs to the metallo-dependent hydrolases superfamily. MTA/SAH deaminase family. In terms of assembly, homotetramer. Requires Zn(2+) as cofactor.

It carries out the reaction 5'-deoxyadenosine + H2O + H(+) = 5'-deoxyinosine + NH4(+). The enzyme catalyses S-adenosyl-L-homocysteine + H2O + H(+) = S-inosyl-L-homocysteine + NH4(+). It catalyses the reaction S-methyl-5'-thioadenosine + H2O + H(+) = S-methyl-5'-thioinosine + NH4(+). The catalysed reaction is adenosine + H2O + H(+) = inosine + NH4(+). Its pathway is amino-acid biosynthesis; S-adenosyl-L-methionine biosynthesis. Functionally, catalyzes the deamination of three SAM-derived enzymatic products, namely 5'-deoxyadenosine, S-adenosyl-L-homocysteine, and 5'-methylthioadenosine, to produce the inosine analogs. Can also deaminate adenosine. The preferred substrate for this enzyme is 5'-deoxyadenosine, but all these substrates are efficiently deaminated. Likely functions in a S-adenosyl-L-methionine (SAM) recycling pathway from S-adenosyl-L-homocysteine (SAH) produced from SAM-dependent methylation reactions. May also be involved in the recycling of 5'-deoxyadenosine, whereupon the 5'-deoxyribose moiety of 5'-deoxyinosine is further metabolized to deoxyhexoses used for the biosynthesis of aromatic amino acids in methanogens. The protein is 5'-deoxyadenosine deaminase of Methanococcus maripaludis (strain C6 / ATCC BAA-1332).